Reading from the N-terminus, the 186-residue chain is Large ribosomal subunit protein bL12c (186 aa).

The span at 1-11 shows a compositional bias: polar residues; that stretch reads MASTLSTITLR. 2 disordered regions span residues 1–23 and 162–186; these read MAST…STHA and EGVS…VSIA. A chloroplast-targeting transit peptide spans 1–53; the sequence is MASTLSTITLRSPSPSTASSTHASIPFPKKALEFPIRTPKLHHRRATFLRPLA. The span at 12–23 shows a compositional bias: low complexity; it reads SPSPSTASSTHA. Over residues 162–180 the composition is skewed to basic and acidic residues; sequence EGVSKDEAEDAKKQLEEAG.

It belongs to the bacterial ribosomal protein bL12 family.

It localises to the plastid. Its subcellular location is the chloroplast. In Nicotiana tabacum (Common tobacco), this protein is Large ribosomal subunit protein bL12c (RPL12).